Consider the following 137-residue polypeptide: Active regulator of SIRT1 (137 aa).

Arg7 carries the citrulline modification. A compositionally biased stretch (low complexity) spans 14–24 (GAPEAPGAAPG). Positions 14-58 (GAPEAPGAAPGHTKPSQAPMKRTRKAKATQAQKLRNSAKGKVPKS) are disordered. Ser84 is modified (phosphoserine). A disordered region spans residues 96 to 120 (RQNRGRKACDRPVTKTKKKKKAEGT).

Belongs to the AROS family. As to quaternary structure, part of the small subunit (SSU) processome, composed of more than 70 proteins and the RNA chaperone small nucleolar RNA (snoRNA) U3. Interacts with RPS19; the interaction is direct and mediates the integration of RPS19 in state post-A1. Interacts with SIRT1. Post-translationally, citrullinated by PADI4.

The protein localises to the nucleus. The protein resides in the nucleolus. In terms of biological role, part of the small subunit (SSU) processome, first precursor of the small eukaryotic ribosomal subunit. During the assembly of the SSU processome in the nucleolus, many ribosome biogenesis factors, an RNA chaperone and ribosomal proteins associate with the nascent pre-rRNA and work in concert to generate RNA folding, modifications, rearrangements and cleavage as well as targeted degradation of pre-ribosomal RNA by the RNA exosome. Acts as a chaperone that specifically mediates the integration of RPS19 in state post-A1. Direct regulator of SIRT1. Enhances SIRT1-mediated deacetylation of p53/TP53, thereby participating in inhibition of p53/TP53-mediated transcriptional activity. The sequence is that of Active regulator of SIRT1 (RPS19BP1) from Bos taurus (Bovine).